We begin with the raw amino-acid sequence, 162 residues long: MRIGHGFDVHKFGENGSGPLIIGGVRIPYEKGLLAHSDGDVALHAATDALLGAAALGDIGKLFPDTDPAFKGADSRALLREAYRRILAKGYRLGNLDITIIAQAPKMAPHIPQMRVHLAEDLQCHMDDINVKATTTEQLGFTGRGEGIACEAVALLIKVEQA.

2 residues coordinate a divalent metal cation: D8 and H10. Residues 8–10 (DVH) and 36–37 (HS) each bind 4-CDP-2-C-methyl-D-erythritol 2-phosphate. A divalent metal cation is bound at residue H44. Residues 58-60 (DIG), 63-67 (FPDTD), 102-108 (AQAPKMA), 134-137 (TTTE), F141, and R144 contribute to the 4-CDP-2-C-methyl-D-erythritol 2-phosphate site.

The protein belongs to the IspF family. Homotrimer. A divalent metal cation is required as a cofactor.

The catalysed reaction is 4-CDP-2-C-methyl-D-erythritol 2-phosphate = 2-C-methyl-D-erythritol 2,4-cyclic diphosphate + CMP. Its pathway is isoprenoid biosynthesis; isopentenyl diphosphate biosynthesis via DXP pathway; isopentenyl diphosphate from 1-deoxy-D-xylulose 5-phosphate: step 4/6. Functionally, involved in the biosynthesis of isopentenyl diphosphate (IPP) and dimethylallyl diphosphate (DMAPP), two major building blocks of isoprenoid compounds. Catalyzes the conversion of 4-diphosphocytidyl-2-C-methyl-D-erythritol 2-phosphate (CDP-ME2P) to 2-C-methyl-D-erythritol 2,4-cyclodiphosphate (ME-CPP) with a corresponding release of cytidine 5-monophosphate (CMP). The chain is 2-C-methyl-D-erythritol 2,4-cyclodiphosphate synthase from Yersinia enterocolitica serotype O:8 / biotype 1B (strain NCTC 13174 / 8081).